The primary structure comprises 177 residues: Large ribosomal subunit protein uL6 (177 aa).

The protein belongs to the universal ribosomal protein uL6 family. Part of the 50S ribosomal subunit.

Its function is as follows. This protein binds to the 23S rRNA, and is important in its secondary structure. It is located near the subunit interface in the base of the L7/L12 stalk, and near the tRNA binding site of the peptidyltransferase center. In Vibrio atlanticus (strain LGP32) (Vibrio splendidus (strain Mel32)), this protein is Large ribosomal subunit protein uL6.